The chain runs to 115 residues: Transcription and mRNA export factor ENY2 (115 aa).

Belongs to the ENY2 family. In terms of assembly, component of a deubiquitination module (DUB module) formed by ENY2, SGF11, and UBP22 in Arabidopsis. Interacts directly with SGF11, but not with UBP22. Interacts with MOS4. As to expression, expressed in roots, cotyledons, leaves and upper part of sepals.

The protein resides in the nucleus. Its subcellular location is the nucleoplasm. Component of a deubiquitination module (DUB module) that specifically deubiquinates monoubiquinated histone H2B (H2Bub). Does not seem to be a component of the TREX-2 complex. Seems to act independently of the SAGA multiprotein complex. The DUB module is responsible for the major H2Bub deubiquitinase activity in Arabidopsis. In Arabidopsis thaliana (Mouse-ear cress), this protein is Transcription and mRNA export factor ENY2.